The chain runs to 268 residues: Putative hydro-lyase ABSDF2257 (268 aa).

The protein belongs to the D-glutamate cyclase family.

This is Putative hydro-lyase ABSDF2257 from Acinetobacter baumannii (strain SDF).